Consider the following 291-residue polypeptide: Small ribosomal subunit biogenesis GTPase RsgA 2 (291 aa).

Residues 63 to 221 (ENALVRPPVA…VADTPGFSSI (159 aa)) enclose the CP-type G domain. GTP is bound by residues 112 to 115 (SKMD) and 164 to 172 (GQSGVGKST). 4 residues coordinate Zn(2+): Cys-245, Cys-250, His-252, and Cys-258.

This sequence belongs to the TRAFAC class YlqF/YawG GTPase family. RsgA subfamily. In terms of assembly, monomer. Associates with 30S ribosomal subunit, binds 16S rRNA. Zn(2+) serves as cofactor.

It is found in the cytoplasm. In terms of biological role, one of several proteins that assist in the late maturation steps of the functional core of the 30S ribosomal subunit. Helps release RbfA from mature subunits. May play a role in the assembly of ribosomal proteins into the subunit. Circularly permuted GTPase that catalyzes slow GTP hydrolysis, GTPase activity is stimulated by the 30S ribosomal subunit. This Listeria innocua serovar 6a (strain ATCC BAA-680 / CLIP 11262) protein is Small ribosomal subunit biogenesis GTPase RsgA 2.